The chain runs to 247 residues: 14-3-3 protein gamma-B (247 aa).

This sequence belongs to the 14-3-3 family. Homodimer, and heterodimer with other family members.

The protein localises to the cytoplasm. Its function is as follows. Adapter protein implicated in the regulation of a large spectrum of both general and specialized signaling pathways. Binds to a large number of partners, usually by recognition of a phosphoserine or phosphothreonine motif. Binding generally results in the modulation of the activity of the binding partner. The chain is 14-3-3 protein gamma-B (ywhag-b) from Xenopus laevis (African clawed frog).